The primary structure comprises 338 residues: Large ribosomal subunit protein uL10 (338 aa).

Over residues Lys309–Ala327 the composition is skewed to basic and acidic residues. Residues Lys309–Phe338 form a disordered region.

It belongs to the universal ribosomal protein uL10 family. As to quaternary structure, part of the 50S ribosomal subunit. Forms part of the ribosomal stalk which helps the ribosome interact with GTP-bound translation factors. Forms a heptameric L10(L12)2(L12)2(L12)2 complex, where L10 forms an elongated spine to which the L12 dimers bind in a sequential fashion.

Its function is as follows. Forms part of the ribosomal stalk, playing a central role in the interaction of the ribosome with GTP-bound translation factors. The chain is Large ribosomal subunit protein uL10 from Methanothermococcus thermolithotrophicus (Methanococcus thermolithotrophicus).